A 317-amino-acid chain; its full sequence is Forkhead box protein B2 (317 aa).

A DNA-binding region (fork-head) is located at residues 13-107 (KPPYSYISLT…ENGSFLRRRK (95 aa)).

First expressed within the dorsolateral ectoderm, except for the organizer territory. During gastrulation, expressed in 2 ectodermal stripes adjacent to the dorsal midline. With the onset of neurulation, expression shifts first to the neural plate before settling on the bottom of the neural tube, on top of the notochord. Expression is then absent until stage 35, at which stage a pair of cells in the fourth rhombomere in the dorsolateral outer area of the rhombencephalon show expression. This is followed shortly afterwards by expression in a pair of cells in rhombomere 6 at the ventricular side of the rhombencephalon.

The protein localises to the nucleus. Functionally, transcription factor. This chain is Forkhead box protein B2, found in Xenopus laevis (African clawed frog).